The primary structure comprises 117 residues: DNA-directed RNA polymerase subunit omega (117 aa).

The protein belongs to the RNA polymerase subunit omega family. In terms of assembly, the RNAP catalytic core consists of 2 alpha, 1 beta, 1 beta' and 1 omega subunit. When a sigma factor is associated with the core the holoenzyme is formed, which can initiate transcription.

The catalysed reaction is RNA(n) + a ribonucleoside 5'-triphosphate = RNA(n+1) + diphosphate. In terms of biological role, promotes RNA polymerase assembly. Latches the N- and C-terminal regions of the beta' subunit thereby facilitating its interaction with the beta and alpha subunits. This is DNA-directed RNA polymerase subunit omega from Ruegeria pomeroyi (strain ATCC 700808 / DSM 15171 / DSS-3) (Silicibacter pomeroyi).